Here is a 370-residue protein sequence, read N- to C-terminus: Histidinol-phosphate aminotransferase 1 (370 aa).

Position 222 is an N6-(pyridoxal phosphate)lysine (K222).

The protein belongs to the class-II pyridoxal-phosphate-dependent aminotransferase family. Histidinol-phosphate aminotransferase subfamily. As to quaternary structure, homodimer. It depends on pyridoxal 5'-phosphate as a cofactor.

The enzyme catalyses L-histidinol phosphate + 2-oxoglutarate = 3-(imidazol-4-yl)-2-oxopropyl phosphate + L-glutamate. It functions in the pathway amino-acid biosynthesis; L-histidine biosynthesis; L-histidine from 5-phospho-alpha-D-ribose 1-diphosphate: step 7/9. The chain is Histidinol-phosphate aminotransferase 1 from Bacillus cereus (strain ZK / E33L).